The chain runs to 81 residues: MKNSSLLFILIVVFVISSSENGIMIGEAKKCSNSWICEGDEKCKEKCMADYKGNGTCYYPSPPSKQHPEFFYPTCWCGFDC.

The first 19 residues, 1–19 (MKNSSLLFILIVVFVISSS), serve as a signal peptide directing secretion. Intrachain disulfides connect Cys-31–Cys-81, Cys-37–Cys-57, Cys-43–Cys-75, and Cys-47–Cys-77.

Belongs to the DEFL family.

The protein localises to the secreted. This is Putative defensin-like protein 188 (LCR41) from Arabidopsis thaliana (Mouse-ear cress).